The primary structure comprises 188 residues: Peroxiredoxin y4vD (188 aa).

The Thioredoxin domain maps to 2 to 152; it reads PVKKRVPFVA…VEQWFEEEGF (151 aa). The active-site Cysteine sulfenic acid (-SOH) intermediate (for peroxiredoxin activity) is Cys56.

It belongs to the peroxiredoxin family. Prx5 subfamily. In terms of assembly, monomer.

The enzyme catalyses a hydroperoxide + 2 glutathione = an alcohol + glutathione disulfide + H2O. In terms of biological role, thiol-specific peroxidase that catalyzes the reduction of hydrogen peroxide and organic hydroperoxides to water and alcohols, respectively. Plays a role in cell protection against oxidative stress by detoxifying peroxides. The chain is Peroxiredoxin y4vD from Sinorhizobium fredii (strain NBRC 101917 / NGR234).